The chain runs to 447 residues: Glutamate--tRNA ligase 1 (447 aa).

The 'HIGH' region motif lies at 10-20 (PSPTGMLHVGN). A 'KMSKS' region motif is present at residues 240-244 (KISKR). Lys243 is an ATP binding site.

It belongs to the class-I aminoacyl-tRNA synthetase family. Glutamate--tRNA ligase type 1 subfamily. In terms of assembly, monomer.

It localises to the cytoplasm. It carries out the reaction tRNA(Glu) + L-glutamate + ATP = L-glutamyl-tRNA(Glu) + AMP + diphosphate. Catalyzes the attachment of glutamate to tRNA(Glu) in a two-step reaction: glutamate is first activated by ATP to form Glu-AMP and then transferred to the acceptor end of tRNA(Glu). This Rickettsia conorii (strain ATCC VR-613 / Malish 7) protein is Glutamate--tRNA ligase 1.